A 605-amino-acid chain; its full sequence is Ankyrin repeat domain-containing protein 13D (605 aa).

UIM domains lie at 482–501 (EDDD…AGTE) and 528–547 (EEQL…STES). The segment covering 538–554 (QESLQLSTESRGPESPQ) has biased composition (low complexity). The interval 538 to 605 (QESLQLSTES…RILQLSLTEH (68 aa)) is disordered. Ser-552 bears the Phosphoserine mark. At Thr-556 the chain carries Phosphothreonine. Residues 564–575 (SFEEQLRLALEL) show a composition bias toward low complexity. UIM domains are found at residues 564–583 (SFEE…QEEL) and 589–605 (QEED…LTEH). Residues 576 to 589 (SSREQEELERRGQQ) show a composition bias toward basic and acidic residues.

Interacts with EGFR (ubiquitinated); the interaction is direct and may regulate EGFR internalization.

It is found in the cell membrane. It localises to the late endosome. In terms of biological role, ubiquitin-binding protein that specifically recognizes and binds 'Lys-63'-linked ubiquitin. Does not bind 'Lys-48'-linked ubiquitin. Positively regulates the internalization of ligand-activated EGFR by binding to the Ub moiety of ubiquitinated EGFR at the cell membrane. The chain is Ankyrin repeat domain-containing protein 13D (Ankrd13d) from Mus musculus (Mouse).